Consider the following 391-residue polypeptide: MSESNGTDVLPLTAQVPLAFLMSLLAFAITIGNAVVILAFVADRNLRHRSNYFFLNLAISDFFVGVISIPLYIPHTLFNWNFGSGICMFWLITDYLLCTASVYSIVLISYDRYQSVSNAVRYRAQHTGILKIVAQMVAVWILAFLVNGPMILASDSWKNSTNTEECEPGFVTEWYILAITAFLEFLLPVSLVVYFSVQIYWSLWKRGSLSRCPSHAGFIATSSRGTGHSRRTGLACRTSLPGLKEPAASLHSESPRGKSSLLVSLRTHMSGSIIAFKVGSFCRSESPVLHQREHVELLRGRKLARSLAVLLSAFAICWAPYCLFTIVLSTYRRGERPKSIWYSIAFWLQWFNSLINPFLYPLCHRRFQKAFWKILCVTKQPAPSQTQSVSS.

Topologically, residues 1-19 are extracellular; that stretch reads MSESNGTDVLPLTAQVPLA. Residue asparagine 5 is glycosylated (N-linked (GlcNAc...) asparagine). The chain crosses the membrane as a helical span at residues 20–40; it reads FLMSLLAFAITIGNAVVILAF. The Cytoplasmic segment spans residues 41–52; the sequence is VADRNLRHRSNY. The chain crosses the membrane as a helical span at residues 53–73; it reads FFLNLAISDFFVGVISIPLYI. The Extracellular portion of the chain corresponds to 74–87; that stretch reads PHTLFNWNFGSGIC. A disulfide bridge links cysteine 87 with cysteine 166. A helical membrane pass occupies residues 88–108; it reads MFWLITDYLLCTASVYSIVLI. Residues 109-131 lie on the Cytoplasmic side of the membrane; that stretch reads SYDRYQSVSNAVRYRAQHTGILK. A helical transmembrane segment spans residues 132–152; the sequence is IVAQMVAVWILAFLVNGPMIL. Residues 153–174 lie on the Extracellular side of the membrane; it reads ASDSWKNSTNTEECEPGFVTEW. An N-linked (GlcNAc...) asparagine glycan is attached at asparagine 159. A helical membrane pass occupies residues 175-195; that stretch reads YILAITAFLEFLLPVSLVVYF. Topologically, residues 196–306 are cytoplasmic; sequence SVQIYWSLWK…LLRGRKLARS (111 aa). The chain crosses the membrane as a helical span at residues 307-327; that stretch reads LAVLLSAFAICWAPYCLFTIV. At 328-343 the chain is on the extracellular side; it reads LSTYRRGERPKSIWYS. A helical transmembrane segment spans residues 344–364; sequence IAFWLQWFNSLINPFLYPLCH. Residues 365-391 are Cytoplasmic-facing; sequence RRFQKAFWKILCVTKQPAPSQTQSVSS.

Belongs to the G-protein coupled receptor 1 family. As to quaternary structure, interacts with TSPAN4.

Its subcellular location is the cell membrane. Functionally, the H4 subclass of histamine receptors could mediate the histamine signals in peripheral tissues. Displays a significant level of constitutive activity (spontaneous activity in the absence of agonist). This is Histamine H4 receptor (Hrh4) from Rattus norvegicus (Rat).